We begin with the raw amino-acid sequence, 149 residues long: Transcriptional repressor NrdR (149 aa).

A zinc finger spans residues 3-34 (CPYCSYEESKVVDSRSAEDYNAIRRRRECLRC). Positions 49–139 (ILVIKKDLSR…VYRQFKDINT (91 aa)) constitute an ATP-cone domain.

It belongs to the NrdR family. The cofactor is Zn(2+).

In terms of biological role, negatively regulates transcription of bacterial ribonucleotide reductase nrd genes and operons by binding to NrdR-boxes. The polypeptide is Transcriptional repressor NrdR (Clostridium perfringens (strain ATCC 13124 / DSM 756 / JCM 1290 / NCIMB 6125 / NCTC 8237 / Type A)).